Reading from the N-terminus, the 336-residue chain is 3-isopropylmalate dehydrogenase (336 aa).

Residues arginine 86, arginine 96, arginine 117, and aspartate 201 each contribute to the substrate site. Positions 201, 225, and 229 each coordinate Mg(2+). 258–270 (GAAFDIAGKGIAN) serves as a coordination point for NAD(+).

It belongs to the isocitrate and isopropylmalate dehydrogenases family. In terms of assembly, homotetramer. The cofactor is Mg(2+). Mn(2+) is required as a cofactor.

The protein resides in the cytoplasm. It catalyses the reaction (2R,3S)-3-isopropylmalate + NAD(+) = 4-methyl-2-oxopentanoate + CO2 + NADH. It functions in the pathway amino-acid biosynthesis; L-leucine biosynthesis; L-leucine from 3-methyl-2-oxobutanoate: step 3/4. Its function is as follows. Catalyzes the oxidation of 3-carboxy-2-hydroxy-4-methylpentanoate (3-isopropylmalate) to 3-carboxy-4-methyl-2-oxopentanoate. The product decarboxylates to 4-methyl-2 oxopentanoate. This Saccharolobus solfataricus (strain ATCC 35092 / DSM 1617 / JCM 11322 / P2) (Sulfolobus solfataricus) protein is 3-isopropylmalate dehydrogenase (leuB).